The following is a 284-amino-acid chain: Urease accessory protein UreD (284 aa).

The segment at 1 to 28 (MQSEQQAIGASGCEDAQQPVRQQRARGR) is disordered.

It belongs to the UreD family. As to quaternary structure, ureD, UreF and UreG form a complex that acts as a GTP-hydrolysis-dependent molecular chaperone, activating the urease apoprotein by helping to assemble the nickel containing metallocenter of UreC. The UreE protein probably delivers the nickel.

It is found in the cytoplasm. Required for maturation of urease via the functional incorporation of the urease nickel metallocenter. This Agrobacterium fabrum (strain C58 / ATCC 33970) (Agrobacterium tumefaciens (strain C58)) protein is Urease accessory protein UreD.